The primary structure comprises 274 residues: Dermonecrotic toxin SdSicTox-betaIIB1bviii (274 aa).

H5 is an active-site residue. E25 and D27 together coordinate Mg(2+). Catalysis depends on H41, which acts as the Nucleophile. Intrachain disulfides connect C45–C51 and C47–C190. D85 is a Mg(2+) binding site.

Belongs to the arthropod phospholipase D family. Class II subfamily. Requires Mg(2+) as cofactor. Expressed by the venom gland.

The protein resides in the secreted. The catalysed reaction is an N-(acyl)-sphingosylphosphocholine = an N-(acyl)-sphingosyl-1,3-cyclic phosphate + choline. The enzyme catalyses an N-(acyl)-sphingosylphosphoethanolamine = an N-(acyl)-sphingosyl-1,3-cyclic phosphate + ethanolamine. It catalyses the reaction a 1-acyl-sn-glycero-3-phosphocholine = a 1-acyl-sn-glycero-2,3-cyclic phosphate + choline. It carries out the reaction a 1-acyl-sn-glycero-3-phosphoethanolamine = a 1-acyl-sn-glycero-2,3-cyclic phosphate + ethanolamine. Its function is as follows. Dermonecrotic toxins cleave the phosphodiester linkage between the phosphate and headgroup of certain phospholipids (sphingolipid and lysolipid substrates), forming an alcohol (often choline) and a cyclic phosphate. This toxin acts on sphingomyelin (SM). It may also act on ceramide phosphoethanolamine (CPE), lysophosphatidylcholine (LPC) and lysophosphatidylethanolamine (LPE), but not on lysophosphatidylserine (LPS), and lysophosphatidylglycerol (LPG). It acts by transphosphatidylation, releasing exclusively cyclic phosphate products as second products. Induces dermonecrosis, hemolysis, increased vascular permeability, edema, inflammatory response, and platelet aggregation. This is Dermonecrotic toxin SdSicTox-betaIIB1bviii from Sicarius cf. damarensis (strain GJB-2008) (Six-eyed sand spider).